A 291-amino-acid polypeptide reads, in one-letter code: Deaminated glutathione amidase (291 aa).

A CN hydrolase domain is found at 13-268 (KRIGLGQITS…NDIAFVDIDL (256 aa)). The active-site Proton acceptor is glutamate 52. Catalysis depends on lysine 130, which acts as the Proton donor. The active-site Nucleophile is the cysteine 172.

It belongs to the carbon-nitrogen hydrolase superfamily. NIT1/NIT2 family.

It carries out the reaction N-(4-oxoglutaryl)-L-cysteinylglycine + H2O = L-cysteinylglycine + 2-oxoglutarate. In terms of biological role, catalyzes the hydrolysis of the amide bond in N-(4-oxoglutarate)-L-cysteinylglycine (deaminated glutathione), a metabolite repair reaction to dispose of the harmful deaminated glutathione. This Dictyostelium discoideum (Social amoeba) protein is Deaminated glutathione amidase (nit1-1).